Consider the following 313-residue polypeptide: Ribosomal RNA small subunit methyltransferase H (313 aa).

Residues 35–37, Asp55, Phe79, Asp100, and Gln107 each bind S-adenosyl-L-methionine; that span reads GGH.

It belongs to the methyltransferase superfamily. RsmH family.

The protein resides in the cytoplasm. The catalysed reaction is cytidine(1402) in 16S rRNA + S-adenosyl-L-methionine = N(4)-methylcytidine(1402) in 16S rRNA + S-adenosyl-L-homocysteine + H(+). In terms of biological role, specifically methylates the N4 position of cytidine in position 1402 (C1402) of 16S rRNA. The polypeptide is Ribosomal RNA small subunit methyltransferase H (Burkholderia pseudomallei (strain K96243)).